The primary structure comprises 492 residues: Serine/threonine protein phosphatase 2A 57 kDa regulatory subunit B' theta isoform (492 aa).

A disordered region spans residues 1–63; the sequence is MWKQILSKLP…GFKEGNLKGN (63 aa). Residues 16 to 39 show a composition bias toward low complexity; the sequence is KNHSSSSSSTSKSSDNGASKSGNS. The short motif at 490–492 is the Microbody targeting signal element; that stretch reads SSL.

Belongs to the phosphatase 2A regulatory subunit B56 family. As to quaternary structure, PP2A consists of a common heteromeric enzyme, composed of a catalytic subunit (subunits C), a constant regulatory subunit (subunit A), and a variety of regulatory subunits such as subunits B (the R2/B/PR55/B55, R3/B''/PR72/PR130/PR59 and R5/B'/B56 families). Interacts with BZR1. Interacts with PP2A2, PP2A5 and PP2AA2. As to expression, highly expressed in dry seeds. Expressed in roots, cotyledons, rosette leaves and flowers.

It localises to the cytoplasm. It is found in the cytosol. Its subcellular location is the peroxisome. Functionally, the B regulatory subunit may modulate substrate selectivity and catalytic activity, and may also direct the localization of the catalytic enzyme to a particular subcellular compartment. Associates with the serine/threonine-protein phosphatase PP2A catalytic subunit C and regulatory subunit A to positively regulates beta-oxidation of fatty acids and protoauxins in peroxisomes by dephosphorylating peroxisomal beta-oxidation-related proteins. Required for the formation of the PP2A holoenzyme that negatively regulates brassinosteroid signaling by dephosphorylating and inactivating BRI1 in the cytoplasm. This Arabidopsis thaliana (Mouse-ear cress) protein is Serine/threonine protein phosphatase 2A 57 kDa regulatory subunit B' theta isoform (B'THETA).